The following is a 735-amino-acid chain: Stonin-1 (735 aa).

A disordered region spans residues 1–35 (MCSTNPGKWVTFDDDPAVQSSQKSKNFPLENQGVC). An SHD domain is found at 275–408 (GWSFMLRIPE…KLPAVSKPKK (134 aa)). An MHD domain is found at 412 to 715 (EQEISLEIVD…ACYNIQVEIE (304 aa)).

This sequence belongs to the Stoned B family. As to expression, ubiquitous.

The protein resides in the cytoplasm. It is found in the membrane. Functionally, may be involved in the endocytic machinery. The polypeptide is Stonin-1 (STON1) (Homo sapiens (Human)).